A 786-amino-acid chain; its full sequence is Myosin light chain kinase 3 (786 aa).

S155 carries the phosphoserine modification. Disordered regions lie at residues E233–T258, R279–D315, and E333–V443. Polar residues predominate over residues R279–P293. S341 and S422 each carry phosphoserine. Residues V482–L737 enclose the Protein kinase domain. Residues L488–V496 and K511 contribute to the ATP site. Catalysis depends on D603, which acts as the Proton acceptor.

This sequence belongs to the protein kinase superfamily. CAMK Ser/Thr protein kinase family. The cofactor is Mg(2+). Post-translationally, phosphorylated on serine residues. Expressed in cardiomyocytes (at protein level). Up-regulated in heart after experimental myocardial infarction at the mRNA level.

It is found in the cytoplasm. The enzyme catalyses L-seryl-[myosin light chain] + ATP = O-phospho-L-seryl-[myosin light chain] + ADP + H(+). It catalyses the reaction L-threonyl-[myosin light chain] + ATP = O-phospho-L-threonyl-[myosin light chain] + ADP + H(+). Calmodulin-dependent kinase that phosphorylates MYL2 in vitro. Promotes sarcomere formation in cardiomyocytes. Increases cardiomyocyte contractility. The protein is Myosin light chain kinase 3 (Mylk3) of Rattus norvegicus (Rat).